A 405-amino-acid chain; its full sequence is Argininosuccinate synthase (405 aa).

12–20 (AYSGGLDTS) is an ATP binding site. L-citrulline is bound by residues Tyr90 and Ser95. Gly120 contacts ATP. L-aspartate is bound by residues Thr122, Asn126, and Asp127. Residue Asn126 participates in L-citrulline binding. Residues Arg130, Ser179, Ser188, Glu265, and Tyr277 each coordinate L-citrulline.

The protein belongs to the argininosuccinate synthase family. Type 1 subfamily. As to quaternary structure, homotetramer.

The protein resides in the cytoplasm. It catalyses the reaction L-citrulline + L-aspartate + ATP = 2-(N(omega)-L-arginino)succinate + AMP + diphosphate + H(+). It functions in the pathway amino-acid biosynthesis; L-arginine biosynthesis; L-arginine from L-ornithine and carbamoyl phosphate: step 2/3. This is Argininosuccinate synthase from Clostridium perfringens (strain 13 / Type A).